The chain runs to 190 residues: Ribosome maturation factor RimM (190 aa).

The region spanning 102 to 190 (EDEYYWIDLV…RIDSDWPLED (89 aa)) is the PRC barrel domain.

Belongs to the RimM family. In terms of assembly, binds ribosomal protein uS19.

The protein resides in the cytoplasm. An accessory protein needed during the final step in the assembly of 30S ribosomal subunit, possibly for assembly of the head region. Essential for efficient processing of 16S rRNA. May be needed both before and after RbfA during the maturation of 16S rRNA. It has affinity for free ribosomal 30S subunits but not for 70S ribosomes. This Bordetella avium (strain 197N) protein is Ribosome maturation factor RimM.